Consider the following 143-residue polypeptide: Large ribosomal subunit protein uL11 (143 aa).

This sequence belongs to the universal ribosomal protein uL11 family. In terms of assembly, part of the ribosomal stalk of the 50S ribosomal subunit. Interacts with L10 and the large rRNA to form the base of the stalk. L10 forms an elongated spine to which 2 L12 dimers bind in a sequential fashion forming a pentameric L10(L12)2(L12)2 complex. In terms of processing, one or more lysine residues are methylated.

Its function is as follows. Forms part of the ribosomal stalk which helps the ribosome interact with GTP-bound translation factors. This is Large ribosomal subunit protein uL11 from Agrobacterium fabrum (strain C58 / ATCC 33970) (Agrobacterium tumefaciens (strain C58)).